The chain runs to 463 residues: uncharacterized protein (463 aa).

Helical transmembrane passes span 17-37 (ISLM…SASA), 40-60 (LAGP…FFIM), 97-117 (WFLW…YMGF), 122-142 (VPNW…NFLA), 153-173 (FALI…LMII), 201-221 (GVLL…MIGV), 244-264 (ILIF…WQEI), 278-298 (VGIP…ALSS), 335-355 (AVLA…VVPA), 357-377 (VFTW…AIIL), 401-421 (LFPF…ILMA), and 429-449 (AVII…GKGF).

The protein belongs to the amino acid-polyamine-organocation (APC) superfamily.

Its subcellular location is the cell membrane. This is an uncharacterized protein from Bacillus subtilis (strain 168).